The sequence spans 176 residues: Peptide methionine sulfoxide reductase MsrA (176 aa).

The active site involves Cys-12.

Belongs to the MsrA Met sulfoxide reductase family.

It carries out the reaction L-methionyl-[protein] + [thioredoxin]-disulfide + H2O = L-methionyl-(S)-S-oxide-[protein] + [thioredoxin]-dithiol. It catalyses the reaction [thioredoxin]-disulfide + L-methionine + H2O = L-methionine (S)-S-oxide + [thioredoxin]-dithiol. Its function is as follows. Has an important function as a repair enzyme for proteins that have been inactivated by oxidation. Catalyzes the reversible oxidation-reduction of methionine sulfoxide in proteins to methionine. This is Peptide methionine sulfoxide reductase MsrA from Thermus thermophilus (strain ATCC BAA-163 / DSM 7039 / HB27).